The sequence spans 440 residues: GTPase Der (440 aa).

EngA-type G domains lie at 5-167 and 178-353; these read ATVA…PEQE and IMLS…KEHS. GTP-binding positions include 11–18, 58–62, 120–123, 184–191, 231–235, and 296–299; these read GRPNVGKS, DTGGI, NKSE, DTAGL, and NKWD. Positions 354-438 constitute a KH-like domain; that stretch reads KRITTADVNR…PIRILERVKQ (85 aa).

The protein belongs to the TRAFAC class TrmE-Era-EngA-EngB-Septin-like GTPase superfamily. EngA (Der) GTPase family. Associates with the 50S ribosomal subunit.

GTPase that plays an essential role in the late steps of ribosome biogenesis. The protein is GTPase Der of Natranaerobius thermophilus (strain ATCC BAA-1301 / DSM 18059 / JW/NM-WN-LF).